A 198-amino-acid chain; its full sequence is Nucleoid occlusion factor SlmA (198 aa).

The HTH tetR-type domain maps to 9-70 (RNRREEILQS…SLIEFIEDSL (62 aa)). Residues 33–52 (TTAKLAASVGVSEAALYRHF) constitute a DNA-binding region (H-T-H motif). Positions 117–145 (EQDRLQGRINQLFERIEAQLRQVLREKKM) form a coiled coil.

Belongs to the nucleoid occlusion factor SlmA family. Homodimer. Interacts with FtsZ.

The protein resides in the cytoplasm. It is found in the nucleoid. Required for nucleoid occlusion (NO) phenomenon, which prevents Z-ring formation and cell division over the nucleoid. Acts as a DNA-associated cell division inhibitor that binds simultaneously chromosomal DNA and FtsZ, and disrupts the assembly of FtsZ polymers. SlmA-DNA-binding sequences (SBS) are dispersed on non-Ter regions of the chromosome, preventing FtsZ polymerization at these regions. This Cronobacter sakazakii (strain ATCC BAA-894) (Enterobacter sakazakii) protein is Nucleoid occlusion factor SlmA.